A 309-amino-acid polypeptide reads, in one-letter code: Ornithine carbamoyltransferase (309 aa).

Carbamoyl phosphate is bound by residues 56-59 (STRT), Gln83, Arg107, and 134-137 (HPCQ). L-ornithine-binding positions include Asn165, Asp223, and 227–228 (SM). Residues 263 to 264 (CL) and Arg291 each bind carbamoyl phosphate.

This sequence belongs to the aspartate/ornithine carbamoyltransferase superfamily. OTCase family.

Its subcellular location is the cytoplasm. The catalysed reaction is carbamoyl phosphate + L-ornithine = L-citrulline + phosphate + H(+). The protein operates within amino-acid biosynthesis; L-arginine biosynthesis; L-arginine from L-ornithine and carbamoyl phosphate: step 1/3. Its function is as follows. Reversibly catalyzes the transfer of the carbamoyl group from carbamoyl phosphate (CP) to the N(epsilon) atom of ornithine (ORN) to produce L-citrulline. The protein is Ornithine carbamoyltransferase of Burkholderia mallei (strain ATCC 23344).